We begin with the raw amino-acid sequence, 90 residues long: RNA-binding protein Hfq (90 aa).

In terms of domain architecture, Sm spans 9 to 68 (DPFLNALRRERVPVSIYLVNGIKLQGQVESFDQFVILLKNTVSQMVYKHAISTVVPARPF). Residues 71–90 (TGHQNAQGGYGPQDDVPSGE) form a disordered region.

It belongs to the Hfq family. As to quaternary structure, homohexamer.

Functionally, RNA chaperone that binds small regulatory RNA (sRNAs) and mRNAs to facilitate mRNA translational regulation in response to envelope stress, environmental stress and changes in metabolite concentrations. Also binds with high specificity to tRNAs. This is RNA-binding protein Hfq from Shewanella putrefaciens (strain CN-32 / ATCC BAA-453).